Reading from the N-terminus, the 669-residue chain is DNA polymerase epsilon subunit B (669 aa).

The interval 96 to 115 is disordered; the sequence is QISTRNGSADNLAKKAERSD.

This sequence belongs to the DNA polymerase epsilon subunit B family. Heterotetramer. Consists of four subunits: POL2, DPB2, DPB3 and DPB4.

The protein localises to the nucleus. Its function is as follows. As accessory component of the DNA polymerase epsilon (DNA polymerase II) participates in chromosomal DNA replication. The chain is DNA polymerase epsilon subunit B (DPB2) from Debaryomyces hansenii (strain ATCC 36239 / CBS 767 / BCRC 21394 / JCM 1990 / NBRC 0083 / IGC 2968) (Yeast).